The primary structure comprises 161 residues: GTP-dependent dephospho-CoA kinase (161 aa).

Aspartate 37, isoleucine 38, aspartate 56, lysine 58, glutamate 112, and aspartate 135 together coordinate GTP.

It belongs to the GTP-dependent DPCK family.

The catalysed reaction is 3'-dephospho-CoA + GTP = GDP + CoA + H(+). The protein operates within cofactor biosynthesis; coenzyme A biosynthesis. Its function is as follows. Catalyzes the GTP-dependent phosphorylation of the 3'-hydroxyl group of dephosphocoenzyme A to form coenzyme A (CoA). The protein is GTP-dependent dephospho-CoA kinase of Methanococcus aeolicus (strain ATCC BAA-1280 / DSM 17508 / OCM 812 / Nankai-3).